Here is a 256-residue protein sequence, read N- to C-terminus: Glutamate racemase (256 aa).

Substrate is bound by residues 12-13 (DS) and 44-45 (YG). Catalysis depends on C75, which acts as the Proton donor/acceptor. 76 to 77 (NT) contacts substrate. C186 (proton donor/acceptor) is an active-site residue. 187–188 (TH) provides a ligand contact to substrate.

It belongs to the aspartate/glutamate racemases family.

The enzyme catalyses L-glutamate = D-glutamate. It participates in cell wall biogenesis; peptidoglycan biosynthesis. In terms of biological role, provides the (R)-glutamate required for cell wall biosynthesis. The polypeptide is Glutamate racemase (Clostridium acetobutylicum (strain ATCC 824 / DSM 792 / JCM 1419 / IAM 19013 / LMG 5710 / NBRC 13948 / NRRL B-527 / VKM B-1787 / 2291 / W)).